A 138-amino-acid polypeptide reads, in one-letter code: Lactoylglutathione lyase (138 aa).

The VOC domain maps to 2–126 (RLLHTMLRVG…DGYKIEFIQK (125 aa)). Position 5 (H5) interacts with Ni(2+). Residue R9 coordinates substrate. A Ni(2+)-binding site is contributed by E56. Positions 60 and 74 each coordinate substrate. Positions 74 and 122 each coordinate Ni(2+). The Proton donor/acceptor role is filled by E122.

Belongs to the glyoxalase I family. Ni(2+) is required as a cofactor.

It catalyses the reaction (R)-S-lactoylglutathione = methylglyoxal + glutathione. Its pathway is secondary metabolite metabolism; methylglyoxal degradation; (R)-lactate from methylglyoxal: step 1/2. Its function is as follows. Catalyzes the conversion of hemimercaptal, formed from methylglyoxal and glutathione, to S-lactoylglutathione. This is Lactoylglutathione lyase (gloA) from Neisseria meningitidis serogroup A / serotype 4A (strain DSM 15465 / Z2491).